Here is a 507-residue protein sequence, read N- to C-terminus: Ribonuclease Y (507 aa).

The helical transmembrane segment at 1-21 (MLWYIVAGAGGLLIGYLIASY) threads the bilayer. The region spanning 197–282 (TVSTVSLPSD…EMYEKAKQEV (86 aa)) is the KH domain. One can recognise an HD domain in the interval 323 to 416 (VLNHSIEVAL…VAAADALSAA (94 aa)).

The protein belongs to the RNase Y family.

The protein resides in the cell membrane. In terms of biological role, endoribonuclease that initiates mRNA decay. The sequence is that of Ribonuclease Y from Thermotoga petrophila (strain ATCC BAA-488 / DSM 13995 / JCM 10881 / RKU-1).